Consider the following 98-residue polypeptide: NADH-ubiquinone oxidoreductase chain 4L (98 aa).

Transmembrane regions (helical) follow at residues 1–21 (MSLI…GLLM), 26–46 (LMSA…FTTL), and 61–81 (IILL…LVMI).

Belongs to the complex I subunit 4L family. In terms of assembly, core subunit of respiratory chain NADH dehydrogenase (Complex I) which is composed of 45 different subunits.

The protein resides in the mitochondrion inner membrane. The enzyme catalyses a ubiquinone + NADH + 5 H(+)(in) = a ubiquinol + NAD(+) + 4 H(+)(out). In terms of biological role, core subunit of the mitochondrial membrane respiratory chain NADH dehydrogenase (Complex I) which catalyzes electron transfer from NADH through the respiratory chain, using ubiquinone as an electron acceptor. Part of the enzyme membrane arm which is embedded in the lipid bilayer and involved in proton translocation. The chain is NADH-ubiquinone oxidoreductase chain 4L (MT-ND4L) from Physeter macrocephalus (Sperm whale).